We begin with the raw amino-acid sequence, 393 residues long: Major tail sheath protein (393 aa).

It belongs to the myoviridae tail sheath protein family.

It is found in the virion. Functionally, forms the virus contractile tail sheath. This Serratia phage KSP20 (Serratia marcescens bacteriophage KSP20) protein is Major tail sheath protein.